Here is a 313-residue protein sequence, read N- to C-terminus: Hydroxyacylglutathione hydrolase, mitochondrial (313 aa).

Residues His107, His109, Asp111, His112, His163, and Asp187 each contribute to the Zn(2+) site. Substrate-binding positions include 196 to 198 (KFF) and 226 to 228 (HEY). Residue His226 coordinates Zn(2+). Composition is skewed to basic and acidic residues over residues 285–294 (VQEHAGERDP) and 301–313 (IRKE…VPKD). Positions 285-313 (VQEHAGERDPISTMGAIRKEKDHFKVPKD) are disordered. Residue 302–305 (RKEK) coordinates substrate.

The protein belongs to the metallo-beta-lactamase superfamily. Glyoxalase II family. In terms of assembly, monomer. Requires Zn(2+) as cofactor.

Its subcellular location is the mitochondrion matrix. The protein localises to the cytoplasm. It carries out the reaction an S-(2-hydroxyacyl)glutathione + H2O = a 2-hydroxy carboxylate + glutathione + H(+). The enzyme catalyses (R)-S-lactoylglutathione + H2O = (R)-lactate + glutathione + H(+). Functionally, thiolesterase that catalyzes the hydrolysis of S-D-lactoyl-glutathione to form glutathione and D-lactic acid. This Xenopus tropicalis (Western clawed frog) protein is Hydroxyacylglutathione hydrolase, mitochondrial (hagh).